The primary structure comprises 907 residues: Translation initiation factor IF-2 (907 aa).

A disordered region spans residues 26–317 (DAGMKKSSSD…KPKSMQHGFD (292 aa)). Composition is skewed to basic and acidic residues over residues 28 to 44 (GMKKSSSDQVSDEEKQK) and 101 to 248 (SAIE…DTDY). Over residues 299-308 (KGGRKGKLSK) the composition is skewed to basic residues. The 170-residue stretch at 406 to 575 (PRAPVVTIMG…LLQAEVLELT (170 aa)) folds into the tr-type G domain. The tract at residues 415-422 (GHVDHGKT) is G1. A GTP-binding site is contributed by 415–422 (GHVDHGKT). The segment at 440–444 (GITQH) is G2. The tract at residues 461 to 464 (DTPG) is G3. GTP is bound by residues 461–465 (DTPGH) and 515–518 (NKID). The tract at residues 515-518 (NKID) is G4. The interval 551–553 (SAK) is G5.

The protein belongs to the TRAFAC class translation factor GTPase superfamily. Classic translation factor GTPase family. IF-2 subfamily.

The protein localises to the cytoplasm. One of the essential components for the initiation of protein synthesis. Protects formylmethionyl-tRNA from spontaneous hydrolysis and promotes its binding to the 30S ribosomal subunits. Also involved in the hydrolysis of GTP during the formation of the 70S ribosomal complex. This chain is Translation initiation factor IF-2, found in Vibrio vulnificus (strain YJ016).